A 342-amino-acid polypeptide reads, in one-letter code: uncharacterized protein (342 aa).

The next 10 membrane-spanning stretches (helical) occupy residues 8–28, 39–59, 79–99, 108–128, 142–162, 175–195, 207–227, 242–262, 276–296, and 304–324; these read FESS…TSLF, ISFL…MLWI, SSFS…FILI, IFWV…PFYM, GWYI…LIMP, INYF…AVVI, AMAP…VALI, FYIF…MAII, AMSW…THLV, and IVDY…IVTL.

This sequence belongs to the tellurite-resistance/dicarboxylate transporter (TDT) family.

The protein resides in the cell membrane. This is an uncharacterized protein from Methanocaldococcus jannaschii (strain ATCC 43067 / DSM 2661 / JAL-1 / JCM 10045 / NBRC 100440) (Methanococcus jannaschii).